The chain runs to 599 residues: Elongation factor 4 (599 aa).

The tr-type G domain occupies 5–187 (AHIRNFSIVA…AIVKHLPAPK (183 aa)). GTP is bound by residues 17 to 22 (DHGKST) and 134 to 137 (NKID).

It belongs to the TRAFAC class translation factor GTPase superfamily. Classic translation factor GTPase family. LepA subfamily.

The protein resides in the cell inner membrane. It carries out the reaction GTP + H2O = GDP + phosphate + H(+). In terms of biological role, required for accurate and efficient protein synthesis under certain stress conditions. May act as a fidelity factor of the translation reaction, by catalyzing a one-codon backward translocation of tRNAs on improperly translocated ribosomes. Back-translocation proceeds from a post-translocation (POST) complex to a pre-translocation (PRE) complex, thus giving elongation factor G a second chance to translocate the tRNAs correctly. Binds to ribosomes in a GTP-dependent manner. This Ruegeria pomeroyi (strain ATCC 700808 / DSM 15171 / DSS-3) (Silicibacter pomeroyi) protein is Elongation factor 4.